The following is a 259-amino-acid chain: MNKPVLVSFLVSGDPNPDATLKFMKTLDKYSGVIELGIPFSDPVADGPTIQAADVRALSNGFKIAKSFEVLKEFRKESDTPVILMTYYNPVFKRGIENFVISAKEAGAKGLIIVDLPLQEATEYREICKKHEMGTVFLAAPNTPEERLKISDEASTEFLYLISTFGITGARDTFEQMTFDFIKRARTTCKGKICVGFGISKGSHAESLIEQGADGVIVGSAFVDIIKNYGDSEEALVKLEEFAKELSEGIDKGYEKRNK.

Residues Glu35 and Asp46 each act as proton acceptor in the active site.

The protein belongs to the TrpA family. In terms of assembly, tetramer of two alpha and two beta chains.

It catalyses the reaction (1S,2R)-1-C-(indol-3-yl)glycerol 3-phosphate + L-serine = D-glyceraldehyde 3-phosphate + L-tryptophan + H2O. It functions in the pathway amino-acid biosynthesis; L-tryptophan biosynthesis; L-tryptophan from chorismate: step 5/5. Its function is as follows. The alpha subunit is responsible for the aldol cleavage of indoleglycerol phosphate to indole and glyceraldehyde 3-phosphate. The chain is Tryptophan synthase alpha chain from Methanococcus maripaludis (strain C5 / ATCC BAA-1333).